The primary structure comprises 336 residues: Inactive serine/threonine-protein kinase BKN2 (336 aa).

The disordered stretch occupies residues 1-25 (MGNCLKPLKEQPPSASPKPLTIPSS). A lipid anchor (N-myristoyl glycine) is attached at G2. A lipid anchor (S-palmitoyl cysteine) is attached at C4. One can recognise a Protein kinase domain in the interval 52 to 332 (YMVIKGNDNG…QVFDGLNDIA (281 aa)).

It belongs to the protein kinase superfamily. Ser/Thr protein kinase family. As to quaternary structure, component of an immune signaling complex made of, at least, SZE1, BKN2/SZE2, ZAR1 and ZED1. Interacts directly with ZAR1 and Pseudomonas syringae HOPZ1A at the plasma membrane. In terms of processing, N-terminal myristoylation is critical for plasma membrane localization and implication in defense responses. As to expression, expressed in stigma and ovaries in flowers, and in stems and seedlings.

The protein resides in the cell membrane. In terms of biological role, together with SZE1 and ZED1, required for effector-triggered immunity (e.g. Pseudomonas syringae type III effector HopZ1a) via the activation of ZAR1, thus being essential for resistance against P. syringae pv. tomato DC3000 expressing HopZ1a. Collaboratively with BKN1, involved in compatible pollen-stigma interactions. The protein is Inactive serine/threonine-protein kinase BKN2 of Arabidopsis thaliana (Mouse-ear cress).